The sequence spans 248 residues: DNA repair protein RecO (248 aa).

The protein belongs to the RecO family.

Involved in DNA repair and RecF pathway recombination. This Streptomyces avermitilis (strain ATCC 31267 / DSM 46492 / JCM 5070 / NBRC 14893 / NCIMB 12804 / NRRL 8165 / MA-4680) protein is DNA repair protein RecO.